A 514-amino-acid chain; its full sequence is Anthranilate synthase component 1 (514 aa).

L-tryptophan contacts are provided by residues Thr40 and 291-293 (PYM). Position 328 to 329 (328 to 329 (GT)) interacts with chorismate. A Mg(2+)-binding site is contributed by Glu361. Chorismate is bound by residues Tyr449, Arg469, 482-484 (GAG), and Gly484. Glu497 provides a ligand contact to Mg(2+).

It belongs to the anthranilate synthase component I family. As to quaternary structure, heterotetramer consisting of two non-identical subunits: a beta subunit (TrpG) and a large alpha subunit (TrpE). Requires Mg(2+) as cofactor.

It catalyses the reaction chorismate + L-glutamine = anthranilate + pyruvate + L-glutamate + H(+). Its pathway is amino-acid biosynthesis; L-tryptophan biosynthesis; L-tryptophan from chorismate: step 1/5. Its activity is regulated as follows. Feedback inhibited by tryptophan. In terms of biological role, part of a heterotetrameric complex that catalyzes the two-step biosynthesis of anthranilate, an intermediate in the biosynthesis of L-tryptophan. In the first step, the glutamine-binding beta subunit (TrpG) of anthranilate synthase (AS) provides the glutamine amidotransferase activity which generates ammonia as a substrate that, along with chorismate, is used in the second step, catalyzed by the large alpha subunit of AS (TrpE) to produce anthranilate. In the absence of TrpG, TrpE can synthesize anthranilate directly from chorismate and high concentrations of ammonia. This chain is Anthranilate synthase component 1 (trpE), found in Buchnera aphidicola subsp. Rhopalosiphum maidis.